The primary structure comprises 542 residues: Heterogeneous nuclear ribonucleoprotein L-like (542 aa).

A disordered region spans residues 1-71; it reads MSSSSSSPRE…QPEAGGSHHK (71 aa). Residues 18–29 show a composition bias toward basic and acidic residues; sequence YESQAKRLKTEE. Lysine 26 is covalently cross-linked (Glycyl lysine isopeptide (Lys-Gly) (interchain with G-Cter in SUMO2)). Serine 35 bears the Phosphoserine mark. The residue at position 46 (threonine 46) is a Phosphothreonine. Over residues 48-58 the composition is skewed to gly residues; sequence RGGGDGGGGGR. Phosphoserine is present on residues serine 59, serine 68, and serine 75. RRM domains follow at residues 76-150, 166-244, and 335-409; these read PVVH…YSTS, NKVL…YARP, and SVVM…VSKQ. Lysine 491 is covalently cross-linked (Glycyl lysine isopeptide (Lys-Gly) (interchain with G-Cter in SUMO2)).

As to quaternary structure, interacts with HNRNPL. As to expression, widely expressed. Detected in bone marrow stroma cells, skeletal muscle, heart, placenta, pancreas, kidney and lung.

Its function is as follows. RNA-binding protein that functions as a regulator of alternative splicing for multiple target mRNAs, including PTPRC/CD45 and STAT5A. Required for alternative splicing of PTPRC. The sequence is that of Heterogeneous nuclear ribonucleoprotein L-like (HNRNPLL) from Homo sapiens (Human).